A 156-amino-acid polypeptide reads, in one-letter code: ATP synthase subunit b (156 aa).

Residues 7–26 form a helical membrane-spanning segment; the sequence is LIGQLIAFALFVAFCMKYVW.

This sequence belongs to the ATPase B chain family. F-type ATPases have 2 components, F(1) - the catalytic core - and F(0) - the membrane proton channel. F(1) has five subunits: alpha(3), beta(3), gamma(1), delta(1), epsilon(1). F(0) has three main subunits: a(1), b(2) and c(10-14). The alpha and beta chains form an alternating ring which encloses part of the gamma chain. F(1) is attached to F(0) by a central stalk formed by the gamma and epsilon chains, while a peripheral stalk is formed by the delta and b chains.

It localises to the cell inner membrane. F(1)F(0) ATP synthase produces ATP from ADP in the presence of a proton or sodium gradient. F-type ATPases consist of two structural domains, F(1) containing the extramembraneous catalytic core and F(0) containing the membrane proton channel, linked together by a central stalk and a peripheral stalk. During catalysis, ATP synthesis in the catalytic domain of F(1) is coupled via a rotary mechanism of the central stalk subunits to proton translocation. Its function is as follows. Component of the F(0) channel, it forms part of the peripheral stalk, linking F(1) to F(0). The chain is ATP synthase subunit b from Haemophilus ducreyi (strain 35000HP / ATCC 700724).